Here is a 470-residue protein sequence, read N- to C-terminus: Cysteine--tRNA ligase (470 aa).

C27 serves as a coordination point for Zn(2+). The short motif at 29–39 is the 'HIGH' region element; that stretch reads PTVYNHIHIGN. C207, H232, and E236 together coordinate Zn(2+). Residues 265 to 269 carry the 'KMSKS' region motif; the sequence is KMAKS. K268 is an ATP binding site.

It belongs to the class-I aminoacyl-tRNA synthetase family. In terms of assembly, monomer. The cofactor is Zn(2+).

It is found in the cytoplasm. It carries out the reaction tRNA(Cys) + L-cysteine + ATP = L-cysteinyl-tRNA(Cys) + AMP + diphosphate. In Rubrobacter xylanophilus (strain DSM 9941 / JCM 11954 / NBRC 16129 / PRD-1), this protein is Cysteine--tRNA ligase.